The sequence spans 176 residues: Protein Dr1 (176 aa).

Residue alanine 2 is modified to N-acetylalanine. Residues 12 to 75 (TIPRAAINKM…ISPEHVIQAL (64 aa)) enclose the Histone-fold domain. A Nuclear localization signal motif is present at residues 100 to 103 (KRRK). Residues serine 105, serine 106, serine 166, and serine 167 each carry the phosphoserine modification. A compositionally biased stretch (low complexity) spans 152-167 (QLAAASASASNQAGSS). The disordered stretch occupies residues 152–176 (QLAAASASASNQAGSSQDEEDDDDI).

It belongs to the NC2 beta/DR1 family. As to quaternary structure, heterodimer with DRAP1. DR1 exists in solution as a homotetramer that dissociates during interaction with TBP and then, after complexing with TBP, reassociates at a slow rate, to reconstitute the tetramer. Interacts with NFIL3. Component of the ADA2A-containing complex (ATAC), composed of KAT14, KAT2A, TADA2L, TADA3L, ZZ3, MBIP, WDR5, YEATS2, CCDC101 and DR1. In terms of processing, phosphorylation regulates its interaction with TBP. Not phosphorylated when bound to DRAP1.

The protein localises to the nucleus. In terms of biological role, the association of the DR1/DRAP1 heterodimer with TBP results in a functional repression of both activated and basal transcription of class II genes. This interaction precludes the formation of a transcription-competent complex by inhibiting the association of TFIIA and/or TFIIB with TBP. Can bind to DNA on its own. Component of the ATAC complex, a complex with histone acetyltransferase activity on histones H3 and H4. The sequence is that of Protein Dr1 (DR1) from Homo sapiens (Human).